A 135-amino-acid chain; its full sequence is ATP synthase epsilon chain, chloroplastic (135 aa).

This sequence belongs to the ATPase epsilon chain family. As to quaternary structure, F-type ATPases have 2 components, CF(1) - the catalytic core - and CF(0) - the membrane proton channel. CF(1) has five subunits: alpha(3), beta(3), gamma(1), delta(1), epsilon(1). CF(0) has three main subunits: a, b and c.

It localises to the plastid. The protein localises to the chloroplast thylakoid membrane. Its function is as follows. Produces ATP from ADP in the presence of a proton gradient across the membrane. The protein is ATP synthase epsilon chain, chloroplastic of Marchantia polymorpha (Common liverwort).